We begin with the raw amino-acid sequence, 592 residues long: MRTMYCGEVTEAVLGQEIQLVGWINKQRDLGGVIFLDMRDRAGIVQVFFDADTPIATALATTVRNEFCIQIKGLVRARPEGQVNKDMTTGGIEILGLELEILNRSEPLPLDSNQQNSEEQRLRYRYLDLRRPEMAKRMQFRAKVSSFVRRFLDDQDFLDVETPILTKATPEGARDYLVPSRTHKGKFFALPQSPQLFKQLLMMSGMDRYYQIVKCFRDEDLRADRQPEFTQIDIETSFMNADQVMEISEEMIVKLFKEMLNVDLGNFPKMTYAEALRRFGSDKPDLRIDFELYDVADLMKDVEFNVFSGPANDPDSRVAVICVPGGAKLSRKNIDEYGKFVTIYGAKGLAWMKVNEVAKGLEGVQSPVAKFLNEEIVTELLIRTGAKDGDIILFGADKSNIVSEAIGALRLKVAQDLGLVKDQWKPLWVIDFPMFEPLDDGGLTPLHHPFTAPIGLTVEELEANPVGAISNAYDMVLNGCELGGGSVRIHKQDMQAAIFRILKISDEEAEDKFGFLLEALKYGAPPHAGLAFGLDRLVMLMTGTSSIRDVIAFPKTASAACPLTNAPSFANPAVLAELNVAVVADPKKVISE.

An L-aspartate-binding site is contributed by Glu171. The aspartate stretch occupies residues 195 to 198 (QLFK). Arg217 is an L-aspartate binding site. ATP contacts are provided by residues 217 to 219 (RDE) and Gln226. His447 serves as a coordination point for L-aspartate. Glu481 serves as a coordination point for ATP. Arg488 contributes to the L-aspartate binding site. 533–536 (GLDR) lines the ATP pocket.

Belongs to the class-II aminoacyl-tRNA synthetase family. Type 1 subfamily. Homodimer.

Its subcellular location is the cytoplasm. It catalyses the reaction tRNA(Asx) + L-aspartate + ATP = L-aspartyl-tRNA(Asx) + AMP + diphosphate. Aspartyl-tRNA synthetase with relaxed tRNA specificity since it is able to aspartylate not only its cognate tRNA(Asp) but also tRNA(Asn). Reaction proceeds in two steps: L-aspartate is first activated by ATP to form Asp-AMP and then transferred to the acceptor end of tRNA(Asp/Asn). The chain is Aspartate--tRNA(Asp/Asn) ligase from Psychromonas ingrahamii (strain DSM 17664 / CCUG 51855 / 37).